Here is a 93-residue protein sequence, read N- to C-terminus: Non-histone chromosomal protein 6A (93 aa).

2 disordered regions span residues methionine 1–arginine 23 and proline 69–alanine 93. Residues proline 7–lysine 16 are compositionally biased toward basic residues. Residues proline 21–asparagine 89 constitute a DNA-binding region (HMG box). Over residues proline 69 to leucine 87 the composition is skewed to basic and acidic residues.

This sequence belongs to the NHP6 family. As to quaternary structure, weakly associates with the stable SPT16-POB3 heterodimer to form the FACT (yFACT or SNP) complex, which is associated with nucleosomes. Multiple molecules of NHP6 (NHP6A and/or NHP6B) are required to recruit the SPT16-POB3 heterodimer to DNA.

It is found in the nucleus. The protein resides in the chromosome. Its function is as follows. DNA-binding protein that induces severe bending of DNA. Required for DNA-binding by the FACT complex, a general chromatin factor that acts to reorganize nucleosomes. The FACT complex is involved in multiple processes that require DNA as a template such as mRNA elongation, DNA replication and DNA repair. Also augments the fidelity of transcription by RNA polymerase III independently of any role in the FACT complex. Required for transcriptional initiation fidelity of some but not all tRNA genes. Seems to be functionally redundant with NHP6B. The chain is Non-histone chromosomal protein 6A (NHP6A) from Saccharomyces cerevisiae (strain ATCC 204508 / S288c) (Baker's yeast).